Reading from the N-terminus, the 139-residue chain is MRHKSGGRKLQRTSAHRTAMFRNMSASLIKHEQITTTVAKAKELRPYVEKLVTLAKRGGLANRRLAMSRLMDEAQLAKLFDVLAARYKDRNGGYTRIIKAGIRASDAAPIAIIEFVDRDMGAKGQDSGPVTTDEELEDA.

This sequence belongs to the bacterial ribosomal protein bL17 family. In terms of assembly, part of the 50S ribosomal subunit. Contacts protein L32.

This is Large ribosomal subunit protein bL17 from Sphingopyxis alaskensis (strain DSM 13593 / LMG 18877 / RB2256) (Sphingomonas alaskensis).